Consider the following 114-residue polypeptide: Probable acid stress chaperone HdeA (114 aa).

The N-terminal stretch at 1–26 (MIKALFNKNTALAAVAILALSGGAMA) is a signal peptide. An intrachain disulfide couples Cys46 to Cys94.

The protein belongs to the HdeA family.

The protein resides in the periplasm. Its function is as follows. Required for optimal acid stress protection. Exhibits a chaperone-like activity only at low pH by suppressing non-specifically the aggregation of denaturated periplasmic proteins. Contributes to acid resistance. Not required for wild-type virulence in the BALB/c mouse model. The protein is Probable acid stress chaperone HdeA of Brucella abortus (strain 2308).